We begin with the raw amino-acid sequence, 718 residues long: Protein ENHANCED DISEASE RESISTANCE 2 (718 aa).

In terms of domain architecture, PH spans 3 to 110 (KVVYEGWMVR…WKEKIESVID (108 aa)). The segment at 134 to 174 (TGRTASSSDHESQFSAAEDEEDSRRSLMRRTTIGNGPPESV) is disordered. Positions 180-392 (EFDAELANQN…VAGLREWFSQ (213 aa)) constitute an START domain. The tract at residues 437–483 (RNSLLMDEDSDDDDEFQIAESEQEPETSKPETDVKRPEEEPAHNIDL) is disordered. The segment covering 442–461 (MDEDSDDDDEFQIAESEQEP) has biased composition (acidic residues). A compositionally biased stretch (basic and acidic residues) spans 462-479 (ETSKPETDVKRPEEEPAH). A helical membrane pass occupies residues 664–684 (GVLGLVIGVITSLVVEMAFLV).

In terms of tissue distribution, expressed ubiquitously in all tissues and organs, including leaves, roots, flowers, stems and siliques.

The protein localises to the endoplasmic reticulum membrane. It localises to the cell membrane. The protein resides in the endosome membrane. Negative regulator of the salicylic acid- (SA-) mediated resistance to pathogens, including the biotrophic powdery mildew pathogens Golovinomyces cichoracearum and Blumeria graminis, and the downy mildew pathogen Hyaloperonospora parasitica, probably by limiting the initiation of cell death and the establishment of the hypersensitive response (HR). Prevents ethylene-induced senescence. Binds to phosphatidylinositol-4-phosphate (PtdIns(4)P) in vitro. The sequence is that of Protein ENHANCED DISEASE RESISTANCE 2 (EDR2) from Arabidopsis thaliana (Mouse-ear cress).